Reading from the N-terminus, the 205-residue chain is Ribosomal RNA large subunit methyltransferase E (205 aa).

The S-adenosyl-L-methionine site is built by G60, W62, D80, D96, and D121. Catalysis depends on K161, which acts as the Proton acceptor.

Belongs to the class I-like SAM-binding methyltransferase superfamily. RNA methyltransferase RlmE family.

The protein resides in the cytoplasm. The catalysed reaction is uridine(2552) in 23S rRNA + S-adenosyl-L-methionine = 2'-O-methyluridine(2552) in 23S rRNA + S-adenosyl-L-homocysteine + H(+). Its function is as follows. Specifically methylates the uridine in position 2552 of 23S rRNA at the 2'-O position of the ribose in the fully assembled 50S ribosomal subunit. This is Ribosomal RNA large subunit methyltransferase E from Dechloromonas aromatica (strain RCB).